Reading from the N-terminus, the 182-residue chain is Adenylate kinase (182 aa).

12–17 serves as a coordination point for ATP; that stretch reads GAGKGT. The tract at residues 32 to 61 is NMP; it reads STGELLRKEIEMNTALGIQVKDIMNRGELV. Residues T33, R38, 59–61, 85–88, and Q92 contribute to the AMP site; these read ELV and GYPR. The interval 126–132 is LID; that stretch reads LRGRKDD. Position 127 (R127) interacts with ATP. 2 residues coordinate AMP: R129 and R140. ATP is bound at residue R168.

The protein belongs to the adenylate kinase family. In terms of assembly, monomer.

The protein localises to the cytoplasm. It catalyses the reaction AMP + ATP = 2 ADP. Its pathway is purine metabolism; AMP biosynthesis via salvage pathway; AMP from ADP: step 1/1. Catalyzes the reversible transfer of the terminal phosphate group between ATP and AMP. Plays an important role in cellular energy homeostasis and in adenine nucleotide metabolism. In Prochlorococcus marinus (strain MIT 9301), this protein is Adenylate kinase.